Reading from the N-terminus, the 446-residue chain is Na(+)-translocating NADH-quinone reductase subunit A (446 aa).

Belongs to the NqrA family. As to quaternary structure, composed of six subunits; NqrA, NqrB, NqrC, NqrD, NqrE and NqrF.

The enzyme catalyses a ubiquinone + n Na(+)(in) + NADH + H(+) = a ubiquinol + n Na(+)(out) + NAD(+). In terms of biological role, NQR complex catalyzes the reduction of ubiquinone-1 to ubiquinol by two successive reactions, coupled with the transport of Na(+) ions from the cytoplasm to the periplasm. NqrA to NqrE are probably involved in the second step, the conversion of ubisemiquinone to ubiquinol. The polypeptide is Na(+)-translocating NADH-quinone reductase subunit A (Vibrio anguillarum (Listonella anguillarum)).